Reading from the N-terminus, the 1254-residue chain is Juxtamembrane domain-associated catenin (1254 aa).

Disordered regions lie at residues 1–38, 84–106, and 145–209; these read MISS…TMRK, AGPT…DNPP, and PYSN…SAPG. The span at 12 to 22 shows a compositional bias: acidic residues; that stretch reads PIPEEGTEADG. Residues 145-157 are compositionally biased toward polar residues; it reads PYSNIDFDSSGLP. 4 consecutive Fibronectin type-III domains span residues 207-302, 315-411, 428-518, and 530-624; these read APGV…IPIS, APGR…IRPA, PPGQ…LRPT, and ILEA…IEPS. Positions 412-433 are disordered; it reads APQRHVPARKVSESVQPPGQPQ. The segment at 662-685 is disordered; it reads MVRESPPLPERDDSPPPLRRANNN. ARM repeat units lie at residues 733–775, 777–820, 874–922, 969–1012, and 1016–1058; these read GGIP…AVME, DGVR…ESAT, NLIE…YDPA, HVVK…RAAV, and KGLP…KYAL. The tract at residues 920 to 960 is disordered; that stretch reads DPAAAHSSSSKNMKHVASPKPEKKKKDKEKKKDKNPKNIVT. The tract at residues 1159-1254 is disordered; that stretch reads GTARRGDSST…GGGNIDDSWV (96 aa). Positions 1166–1176 are enriched in polar residues; that stretch reads SSTLARPISSQ. The segment covering 1177 to 1187 has biased composition (basic and acidic residues); the sequence is GRERPSMHQLD.

It belongs to the beta-catenin family. Associated with the catenin-cadherin complex consisting of hmr-1, hmp-1 and hmp-2. Interacts with hmr-1. Interacts with picc-1. As to expression, epidermal cells.

Its subcellular location is the cell junction. It localises to the adherens junction. The protein localises to the nucleus. Functionally, may act as a positive modulator of hmr-1 function during epidermal morphogenesis. Required for proper localization of other junctional components, such as pac-1. The protein is Juxtamembrane domain-associated catenin (jac-1) of Caenorhabditis elegans.